A 779-amino-acid chain; its full sequence is Ribosome-releasing factor 2, mitochondrial (779 aa).

The tr-type G domain maps to 68 to 353; the sequence is AKIRNIGIMA…AVTTYLPSPE (286 aa). GTP is bound by residues 77 to 84, 141 to 145, and 195 to 198; these read AHIDAGKT, DTPGH, and NKMD.

This sequence belongs to the TRAFAC class translation factor GTPase superfamily. Classic translation factor GTPase family. EF-G/EF-2 subfamily.

The protein resides in the mitochondrion. The enzyme catalyses GTP + H2O = GDP + phosphate + H(+). Mitochondrial GTPase that mediates the disassembly of ribosomes from messenger RNA at the termination of mitochondrial protein biosynthesis. Acts in collaboration with MRRF. GTP hydrolysis follows the ribosome disassembly and probably occurs on the ribosome large subunit. Not involved in the GTP-dependent ribosomal translocation step during translation elongation. This Mus musculus (Mouse) protein is Ribosome-releasing factor 2, mitochondrial (Gfm2).